The primary structure comprises 358 residues: Ganglioside-induced differentiation-associated protein 1 (358 aa).

In terms of domain architecture, GST N-terminal spans 24–105; it reads VKLILYHWTH…YLEQTFLDEK (82 aa). Residues K50, K172, K173, K188, and K190 each participate in a glycyl lysine isopeptide (Lys-Gly) (interchain with G-Cter in ubiquitin) cross-link. The region spanning 153 to 309 is the GST C-terminal domain; sequence PAYATTRIRS…LISAVLPTAF (157 aa). K203 bears the N6-acetyllysine; alternate mark. K203 participates in a covalent cross-link: Glycyl lysine isopeptide (Lys-Gly) (interchain with G-Cter in ubiquitin); alternate. Residues K206, K207, and K214 each participate in a glycyl lysine isopeptide (Lys-Gly) (interchain with G-Cter in ubiquitin) cross-link. A run of 2 helical transmembrane segments spans residues 292–312 and 320–340; these read VLGH…FRVA and LGTT…FMLF. The segment at 320–358 is required for mitochondrial localization; the sequence is LGTTLVVGLLAGMGYFAFMLFRKRLGSMILALRPRPNYF.

Belongs to the GST superfamily. Homodimer. In terms of processing, ubiquitinated by PRKN during mitophagy, leading to its degradation and enhancement of mitophagy. Deubiquitinated by USP30.

The protein localises to the mitochondrion outer membrane. It is found in the cytoplasm. Functionally, regulates the mitochondrial network by promoting mitochondrial fission. The chain is Ganglioside-induced differentiation-associated protein 1 (GDAP1) from Bos taurus (Bovine).